The primary structure comprises 190 residues: Peptide methionine sulfoxide reductase MsrA (190 aa).

Residue Cys21 is part of the active site.

This sequence belongs to the MsrA Met sulfoxide reductase family.

It catalyses the reaction L-methionyl-[protein] + [thioredoxin]-disulfide + H2O = L-methionyl-(S)-S-oxide-[protein] + [thioredoxin]-dithiol. It carries out the reaction [thioredoxin]-disulfide + L-methionine + H2O = L-methionine (S)-S-oxide + [thioredoxin]-dithiol. Has an important function as a repair enzyme for proteins that have been inactivated by oxidation. Catalyzes the reversible oxidation-reduction of methionine sulfoxide in proteins to methionine. The sequence is that of Peptide methionine sulfoxide reductase MsrA from Polynucleobacter asymbioticus (strain DSM 18221 / CIP 109841 / QLW-P1DMWA-1) (Polynucleobacter necessarius subsp. asymbioticus).